A 151-amino-acid chain; its full sequence is D-aminoacyl-tRNA deacylase (151 aa).

Residues 142 to 143 (GP) carry the Gly-cisPro motif, important for rejection of L-amino acids motif.

It belongs to the DTD family. As to quaternary structure, homodimer.

The protein localises to the cytoplasm. It catalyses the reaction glycyl-tRNA(Ala) + H2O = tRNA(Ala) + glycine + H(+). The catalysed reaction is a D-aminoacyl-tRNA + H2O = a tRNA + a D-alpha-amino acid + H(+). Its function is as follows. An aminoacyl-tRNA editing enzyme that deacylates mischarged D-aminoacyl-tRNAs. Also deacylates mischarged glycyl-tRNA(Ala), protecting cells against glycine mischarging by AlaRS. Acts via tRNA-based rather than protein-based catalysis; rejects L-amino acids rather than detecting D-amino acids in the active site. By recycling D-aminoacyl-tRNA to D-amino acids and free tRNA molecules, this enzyme counteracts the toxicity associated with the formation of D-aminoacyl-tRNA entities in vivo and helps enforce protein L-homochirality. In Psychrobacter arcticus (strain DSM 17307 / VKM B-2377 / 273-4), this protein is D-aminoacyl-tRNA deacylase.